The chain runs to 265 residues: Octanoyltransferase (265 aa).

Positions 35–254 (DEVPDTVLLL…HLRDVLENAE (220 aa)) constitute a BPL/LPL catalytic domain. Substrate is bound by residues 73-80 (RGGKITWH), 184-186 (AIG), and 197-199 (GFA). Residue cysteine 215 is the Acyl-thioester intermediate of the active site.

It belongs to the LipB family.

The protein localises to the cytoplasm. It catalyses the reaction octanoyl-[ACP] + L-lysyl-[protein] = N(6)-octanoyl-L-lysyl-[protein] + holo-[ACP] + H(+). The protein operates within protein modification; protein lipoylation via endogenous pathway; protein N(6)-(lipoyl)lysine from octanoyl-[acyl-carrier-protein]: step 1/2. In terms of biological role, catalyzes the transfer of endogenously produced octanoic acid from octanoyl-acyl-carrier-protein onto the lipoyl domains of lipoate-dependent enzymes. Lipoyl-ACP can also act as a substrate although octanoyl-ACP is likely to be the physiological substrate. The sequence is that of Octanoyltransferase from Streptomyces coelicolor (strain ATCC BAA-471 / A3(2) / M145).